Here is a 411-residue protein sequence, read N- to C-terminus: Histidine--tRNA ligase (411 aa).

This sequence belongs to the class-II aminoacyl-tRNA synthetase family. Homodimer.

The protein resides in the cytoplasm. It carries out the reaction tRNA(His) + L-histidine + ATP = L-histidyl-tRNA(His) + AMP + diphosphate + H(+). This Dictyoglomus turgidum (strain DSM 6724 / Z-1310) protein is Histidine--tRNA ligase.